We begin with the raw amino-acid sequence, 206 residues long: Threonine efflux protein (206 aa).

Residues 1 to 21 form a helical membrane-spanning segment; sequence MLMLFLTVAMVHIVALMSPGP. Over 22–43 the chain is Periplasmic; sequence DFFFVSQTAVSRSRKEAMMGVL. A helical membrane pass occupies residues 44–64; it reads GITCGVMVWAGIALLGLHLII. Residues 65–66 are Cytoplasmic-facing; that stretch reads EK. Residues 67-87 form a helical membrane-spanning segment; sequence MAWLHTLIMVGGGLYLCWMGY. The Periplasmic portion of the chain corresponds to 88–149; it reads QMLRGALKKE…VGDNVGTTAR (62 aa). Residues 150–173 traverse the membrane as a helical segment; sequence WGIFALIIVETLAWFTVVASLFAL. Over 174-206 the chain is Cytoplasmic; it reads PQMRRGYQRLAKWIDGFAGALFAGFGIHLIISR.

The protein belongs to the Rht family.

Its subcellular location is the cell inner membrane. In terms of biological role, conducts the efflux of threonine. The polypeptide is Threonine efflux protein (rhtC) (Escherichia coli O157:H7).